The following is a 550-amino-acid chain: Glucose-6-phosphate isomerase (550 aa).

The active-site Proton donor is the E356. Catalysis depends on residues H387 and K515.

Belongs to the GPI family.

The protein localises to the cytoplasm. The enzyme catalyses alpha-D-glucose 6-phosphate = beta-D-fructose 6-phosphate. It functions in the pathway carbohydrate biosynthesis; gluconeogenesis. It participates in carbohydrate degradation; glycolysis; D-glyceraldehyde 3-phosphate and glycerone phosphate from D-glucose: step 2/4. Catalyzes the reversible isomerization of glucose-6-phosphate to fructose-6-phosphate. This chain is Glucose-6-phosphate isomerase, found in Syntrophobacter fumaroxidans (strain DSM 10017 / MPOB).